The chain runs to 194 residues: Phosphoheptose isomerase (194 aa).

Residues 37 to 194 (ISNSFKQGGK…LIEFEMAKQA (158 aa)) enclose the SIS domain. Residue 52–54 (NGG) participates in substrate binding. His-61 and Glu-65 together coordinate Zn(2+). Substrate contacts are provided by residues Glu-65, 93-94 (ND), 119-121 (STS), Ser-124, and Gln-172. Residues Gln-172 and His-180 each coordinate Zn(2+).

This sequence belongs to the SIS family. GmhA subfamily. In terms of assembly, homotetramer. It depends on Zn(2+) as a cofactor.

The protein localises to the cytoplasm. It catalyses the reaction 2 D-sedoheptulose 7-phosphate = D-glycero-alpha-D-manno-heptose 7-phosphate + D-glycero-beta-D-manno-heptose 7-phosphate. Its pathway is carbohydrate biosynthesis; D-glycero-D-manno-heptose 7-phosphate biosynthesis; D-glycero-alpha-D-manno-heptose 7-phosphate and D-glycero-beta-D-manno-heptose 7-phosphate from sedoheptulose 7-phosphate: step 1/1. Its function is as follows. Catalyzes the isomerization of sedoheptulose 7-phosphate in D-glycero-D-manno-heptose 7-phosphate. This chain is Phosphoheptose isomerase, found in Actinobacillus pleuropneumoniae serotype 5b (strain L20).